The primary structure comprises 292 residues: Elongation factor Ts (292 aa).

Positions 80-83 (TDFV) are involved in Mg(2+) ion dislocation from EF-Tu.

This sequence belongs to the EF-Ts family.

The protein resides in the cytoplasm. In terms of biological role, associates with the EF-Tu.GDP complex and induces the exchange of GDP to GTP. It remains bound to the aminoacyl-tRNA.EF-Tu.GTP complex up to the GTP hydrolysis stage on the ribosome. The polypeptide is Elongation factor Ts (Mycoplasmopsis synoviae (strain 53) (Mycoplasma synoviae)).